A 231-amino-acid polypeptide reads, in one-letter code: Large ribosomal subunit protein uL1 (231 aa).

It belongs to the universal ribosomal protein uL1 family. As to quaternary structure, part of the 50S ribosomal subunit.

In terms of biological role, binds directly to 23S rRNA. The L1 stalk is quite mobile in the ribosome, and is involved in E site tRNA release. Functionally, protein L1 is also a translational repressor protein, it controls the translation of the L11 operon by binding to its mRNA. In Allorhizobium ampelinum (strain ATCC BAA-846 / DSM 112012 / S4) (Agrobacterium vitis (strain S4)), this protein is Large ribosomal subunit protein uL1.